Here is a 153-residue protein sequence, read N- to C-terminus: Aspartate carbamoyltransferase regulatory chain (153 aa).

Zn(2+) contacts are provided by cysteine 109, cysteine 114, cysteine 138, and cysteine 141.

This sequence belongs to the PyrI family. In terms of assembly, contains catalytic and regulatory chains. Zn(2+) is required as a cofactor.

Involved in allosteric regulation of aspartate carbamoyltransferase. This is Aspartate carbamoyltransferase regulatory chain from Cronobacter sakazakii (strain ATCC BAA-894) (Enterobacter sakazakii).